The primary structure comprises 110 residues: Insulin (110 aa).

An N-terminal signal peptide occupies residues 1-24 (MALWMRLLPLLVLLALWGPDPASA). Cystine bridges form between cysteine 31-cysteine 96, cysteine 43-cysteine 109, and cysteine 95-cysteine 100. Residues 57 to 87 (EAEDLQVGQVELGGGPGAGSLQPLALEGSLQ) constitute a propeptide, c peptide.

The protein belongs to the insulin family. As to quaternary structure, heterodimer of a B chain and an A chain linked by two disulfide bonds.

It localises to the secreted. Its function is as follows. Insulin decreases blood glucose concentration. It increases cell permeability to monosaccharides, amino acids and fatty acids. It accelerates glycolysis, the pentose phosphate cycle, and glycogen synthesis in liver. The sequence is that of Insulin (INS) from Pan troglodytes (Chimpanzee).